The following is a 561-amino-acid chain: Long-chain-fatty-acid--CoA ligase (561 aa).

Residue 213 to 224 coordinates ATP; sequence YTGGTTGVAKGA.

Belongs to the ATP-dependent AMP-binding enzyme family. Mg(2+) is required as a cofactor.

The protein resides in the membrane. It carries out the reaction a long-chain fatty acid + ATP + CoA = a long-chain fatty acyl-CoA + AMP + diphosphate. It participates in lipid metabolism; fatty acid beta-oxidation. Its function is as follows. Catalyzes the esterification, concomitant with transport, of exogenous long-chain fatty acids into metabolically active CoA thioesters for subsequent degradation or incorporation into phospholipids. In Salmonella typhi, this protein is Long-chain-fatty-acid--CoA ligase (fadD).